Here is a 48-residue protein sequence, read N- to C-terminus: DNA gyrase inhibitor YacG (48 aa).

4 residues coordinate Zn(2+): cysteine 9, cysteine 12, cysteine 28, and cysteine 32.

Belongs to the DNA gyrase inhibitor YacG family. In terms of assembly, interacts with GyrB. Zn(2+) serves as cofactor.

Its function is as follows. Inhibits all the catalytic activities of DNA gyrase by preventing its interaction with DNA. Acts by binding directly to the C-terminal domain of GyrB, which probably disrupts DNA binding by the gyrase. The chain is DNA gyrase inhibitor YacG from Wigglesworthia glossinidia brevipalpis.